Here is a 737-residue protein sequence, read N- to C-terminus: MNGDSRAAVVTSPPPTTAPHKERYFDRVDENNPEYLRERNMAPDLRQDFNMMEQKKRVSMILQSPAFCEELESMIQEQFKKGKNPTGLLALQQIADFMTTNVPNVYPAAPQGGMAALNMSLGMVTPVNDLRGSDSIAYDKGEKLLRCKLAAFYRLADLFGWSQLIYNHITTRVNSEQEHFLIVPFGLLYSEVTASSLVKINLQGDIVDRGSTNLGVNQAGFTLHSAIYAARPDVKCVVHIHTPAGAAVSAMKCGLLPISPEALSLGEVAYHDYHGILVDEEEKVLIQKNLGPKSKVLILRNHGLVSVGESVEEAFYYIHNLVVACEIQARTLASAGGPDNLVLLNPEKYKAKSRSPGSPVGEGTGSPPKWQIGEQEFEALMRMLDNLGYRTGYPYRYPALREKSKKYSDVEVPASVTGYSFTSDGDSGTCSPLRHSFQKQQREKTRWLNSGRGDEASEEGQNGSSPKSKTKWTKEDGHRTSTSAVPNLFVPLNTNPKEVQEMRNKIREQNLQDIKTAGPQSQVLCGVVMDRSLVQGELVTASKAIIEKEYQPHVIVSTTGPNPFTTLTDRELEEYRREVERKQKGSEENLDEAREQKEKSPPDQPAVPYPPPSTPIKLEEDLVPEPTTGDDSDAATFKPTLPDLSPDEPSEALGFPMLEKEEEAHRPPSPTEAPTEASPEPAPDPAPVAEEAAPSAAEEGAAADPGSDGSPGKSPSKKKKKFRTPSFLKKSKKKSES.

Met-1 is modified (N-acetylmethionine). The disordered stretch occupies residues 1-21 (MNGDSRAAVVTSPPPTTAPHK). Position 12 is a phosphoserine (Ser-12). Ser-59 carries the post-translational modification Phosphoserine; by PKA. The residue at position 64 (Ser-64) is a Phosphoserine. Thr-331 is subject to Phosphothreonine. Phosphoserine occurs at positions 334, 353, 355, 358, and 366. Position 408 is a phosphoserine; by PKA (Ser-408). Residues 419 to 430 (YSFTSDGDSGTC) show a composition bias toward polar residues. Disordered stretches follow at residues 419–490 (YSFT…NLFV) and 576–737 (RREV…KSES). Ser-427 is subject to Phosphoserine. A Phosphothreonine modification is found at Thr-429. Residue Ser-431 is modified to Phosphoserine. Phosphoserine; by PKA is present on Ser-436. At Thr-445 the chain carries Phosphothreonine; by ROCK2. Ser-464 and Ser-465 each carry phosphoserine. At Thr-480 the chain carries Phosphothreonine; by ROCK2. At Ser-481 the chain carries Phosphoserine; by PKA. Over residues 576 to 601 (RREVERKQKGSEENLDEAREQKEKSP) the composition is skewed to basic and acidic residues. Phosphoserine is present on residues Ser-586, Ser-600, and Ser-613. A compositionally biased stretch (pro residues) spans 602 to 614 (PDQPAVPYPPPST). Thr-614 bears the Phosphothreonine mark. Phosphoserine occurs at positions 678, 707, 710, and 714. A compositionally biased stretch (low complexity) spans 687–714 (PVAEEAAPSAAEEGAAADPGSDGSPGKS). Basic residues predominate over residues 715-737 (PSKKKKKFRTPSFLKKSKKKSES). Ser-716 is subject to Phosphoserine; by PKC. Residues 717–734 (KKKKKFRTPSFLKKSKKK) are interaction with calmodulin. Position 726 is a phosphoserine; by PKA and PKC (Ser-726).

This sequence belongs to the aldolase class II family. Adducin subfamily. Heterodimer of an alpha and a beta subunit or an alpha and a gamma subunit.

It localises to the cytoplasm. Its subcellular location is the cytoskeleton. It is found in the cell membrane. Its function is as follows. Membrane-cytoskeleton-associated protein that promotes the assembly of the spectrin-actin network. Binds to calmodulin. In Pongo abelii (Sumatran orangutan), this protein is Alpha-adducin (ADD1).